The chain runs to 663 residues: DNA ligase (663 aa).

NAD(+) contacts are provided by residues 31-35, 80-81, and Glu-109; these read DSEYD and SL. Catalysis depends on Lys-111, which acts as the N6-AMP-lysine intermediate. Residues Arg-132, Glu-166, Lys-282, and Lys-306 each coordinate NAD(+). Zn(2+) is bound by residues Cys-400, Cys-403, Cys-418, and Cys-423. The region spanning 585-663 is the BRCT domain; sequence ELHPVFGEKT…EQMMVDALRN (79 aa).

This sequence belongs to the NAD-dependent DNA ligase family. LigA subfamily. Mg(2+) serves as cofactor. Mn(2+) is required as a cofactor.

It catalyses the reaction NAD(+) + (deoxyribonucleotide)n-3'-hydroxyl + 5'-phospho-(deoxyribonucleotide)m = (deoxyribonucleotide)n+m + AMP + beta-nicotinamide D-nucleotide.. Functionally, DNA ligase that catalyzes the formation of phosphodiester linkages between 5'-phosphoryl and 3'-hydroxyl groups in double-stranded DNA using NAD as a coenzyme and as the energy source for the reaction. It is essential for DNA replication and repair of damaged DNA. The polypeptide is DNA ligase (Macrococcus caseolyticus (strain JCSC5402) (Macrococcoides caseolyticum)).